A 92-amino-acid chain; its full sequence is Small ribosomal subunit protein uS19c (92 aa).

Belongs to the universal ribosomal protein uS19 family.

It is found in the plastid. It localises to the chloroplast. In terms of biological role, protein S19 forms a complex with S13 that binds strongly to the 16S ribosomal RNA. This Draba nemorosa (Woodland whitlowgrass) protein is Small ribosomal subunit protein uS19c.